The primary structure comprises 517 residues: Cytochrome P450 monooxygenase TRI4 (517 aa).

The helical transmembrane segment at 15 to 37 (AVGAAVAVGALYFFCQCFYNLYL) threads the bilayer. N444 carries an N-linked (GlcNAc...) asparagine glycan. Residue C452 coordinates heme.

The protein belongs to the cytochrome P450 family. Requires heme as cofactor.

The protein localises to the membrane. It functions in the pathway sesquiterpene biosynthesis; trichothecene biosynthesis. Its function is as follows. Cytochrome P450 monooxygenase; part of the gene cluster that mediates the production of the antimicrobial trichothecene harzianum A (HA) that plays a role in Botrytis cinerea antagonistic activity and plant defense priming. The biosynthesis of harzianum A begins with the cyclization of farnesyl diphosphate to trichodiene and is catalyzed by the trichodiene synthase TRI5. Trichodiene undergoes a series of oxygenations catalyzed by the cytochrome P450 monooxygenase TRI4. TRI4 controls the addition of 3 oxygens at C-2, C-11, and the C-12, C-13-epoxide to form the intermediate isotrichodiol. Isotrichodiol then undergoes a non-enzymatic isomerization and cyclization to form 12,13-epoxytrichothec-9-ene (EPT) which is further converted to trichodermol by the cytochrome P450 monooxygenase TRI11 via C-4 hydroxylation. The last step of HA synthesis is esterification of an octatriendioyl moiety to the C-4 oxygen of trichodermol. The octatriendioyl moiety is probably produced by the polyketide synthase TRI17 and the esterification performed by the trichothecene O-acetyltransferase TRI3. The polypeptide is Cytochrome P450 monooxygenase TRI4 (Trichoderma arundinaceum).